Here is a 712-residue protein sequence, read N- to C-terminus: Dipeptidyl-peptidase 7 (712 aa).

A signal peptide spans M1–K23. The Charge relay system role is filled by H89. Positions T136 to Q173 form a coiled coil. Catalysis depends on charge relay system residues D225 and S648.

Belongs to the peptidase S46 family.

The protein resides in the cell outer membrane. Its activity is regulated as follows. Is inhibited in vitro by typical serine protease inhibitors like diisopropyl fluorophosphate, Pefablock, and 3,4-dichloroisocoumarin, but not by typical cysteine class inhibitors such as E-64 or iododoacetic acid. Its function is as follows. Catalyzes the removal of dipeptides from the N-terminus of oligopeptides. Shows a broad specificity for both aliphatic and aromatic residues in the P1 position, with glycine or proline being not acceptable in this position. Most potently cleaves the synthetic substrate Met-Leu-methylcoumaryl-7-amide (Met-Leu-MCA), Leu-Arg-MCA and Lys-Ala-MCA to a lesser extent. Is likely involved in amino acid metabolism and bacterial growth of asaccharolytic P.gingivalis, that utilizes amino acids from extracellular proteinaceous nutrients as energy and carbon sources. In Porphyromonas gingivalis (strain ATCC 33277 / DSM 20709 / CIP 103683 / JCM 12257 / NCTC 11834 / 2561), this protein is Dipeptidyl-peptidase 7.